A 338-amino-acid chain; its full sequence is DNA-directed RNA polymerase subunit alpha (338 aa).

An alpha N-terminal domain (alpha-NTD) region spans residues 1–234 (MIERNWNELI…DQLQIFITFE (234 aa)). An alpha C-terminal domain (alpha-CTD) region spans residues 250 to 338 (FNPALLKKVD…DLAKKFEDQI (89 aa)).

This sequence belongs to the RNA polymerase alpha chain family. As to quaternary structure, homodimer. The RNAP catalytic core consists of 2 alpha, 1 beta, 1 beta' and 1 omega subunit. When a sigma factor is associated with the core the holoenzyme is formed, which can initiate transcription.

It catalyses the reaction RNA(n) + a ribonucleoside 5'-triphosphate = RNA(n+1) + diphosphate. DNA-dependent RNA polymerase catalyzes the transcription of DNA into RNA using the four ribonucleoside triphosphates as substrates. The polypeptide is DNA-directed RNA polymerase subunit alpha (Caulobacter vibrioides (strain ATCC 19089 / CIP 103742 / CB 15) (Caulobacter crescentus)).